The primary structure comprises 158 residues: NADH-quinone oxidoreductase subunit B (158 aa).

Positions 37, 38, 102, and 132 each coordinate [4Fe-4S] cluster.

The protein belongs to the complex I 20 kDa subunit family. In terms of assembly, NDH-1 is composed of 14 different subunits. Subunits NuoB, C, D, E, F, and G constitute the peripheral sector of the complex. Requires [4Fe-4S] cluster as cofactor.

Its subcellular location is the cell inner membrane. It catalyses the reaction a quinone + NADH + 5 H(+)(in) = a quinol + NAD(+) + 4 H(+)(out). NDH-1 shuttles electrons from NADH, via FMN and iron-sulfur (Fe-S) centers, to quinones in the respiratory chain. The immediate electron acceptor for the enzyme in this species is believed to be ubiquinone. Couples the redox reaction to proton translocation (for every two electrons transferred, four hydrogen ions are translocated across the cytoplasmic membrane), and thus conserves the redox energy in a proton gradient. The sequence is that of NADH-quinone oxidoreductase subunit B from Thioalkalivibrio sulfidiphilus (strain HL-EbGR7).